A 1220-amino-acid chain; its full sequence is Protein transport protein Sec31A (1220 aa).

WD repeat units lie at residues 4–47 (KEVD…EIFE), 68–111 (RYHK…AGDK), 120–160 (KHTG…TPMT), 166–206 (QPPE…PIIK), 209–254 (DHSN…SPLR), 258–298 (NHAR…VLYE), and 301–342 (TNTQ…DGLR). The interval 161–471 (PGAKTQPPED…IDASQTEFEK (311 aa)) is interaction with SEC13. The WD 8; interaction with SEC13 repeat unit spans residues 397 to 430 (SFSFGGKLVTFENVRMPSHQGAEQQQQQHHVFIS). Phosphoserine occurs at positions 527 and 532. Residue lysine 647 forms a Glycyl lysine isopeptide (Lys-Gly) (interchain with G-Cter in ubiquitin) linkage. 2 disordered regions span residues 791-908 (GEPV…NAYP) and 924-1096 (QLYA…GNTF). Serine 799 carries the post-translational modification Phosphoserine. The tract at residues 800-1113 (PKIPYEKQQL…TKKITKKPIP (314 aa)) is interaction with PDCD6. Residues 842–848 (GFIMHGN) carry the ALG-2-binding site motif-2 (ABS-2) motif. Over residues 849–859 (VNPNAAGQLPT) the composition is skewed to polar residues. A compositionally biased stretch (pro residues) spans 869 to 882 (PPYPQPQPYQPAQP). Over residues 962–972 (PSSSAYALPPG) the composition is skewed to low complexity. Composition is skewed to polar residues over residues 984–995 (PASQRTGPQNGW) and 1031–1053 (PQSQ…SSFP). Threonine 1161 carries the post-translational modification Phosphothreonine. At serine 1163 the chain carries Phosphoserine. A Glycyl lysine isopeptide (Lys-Gly) (interchain with G-Cter in ubiquitin) cross-link involves residue lysine 1217.

This sequence belongs to the WD repeat SEC31 family. In terms of assembly, COPII is composed of at least 5 proteins: the SEC23/24 complex, the SEC13/31 complex and SAR1. SEC13 and SEC31 make a 2:2 tetramer that forms the edge element of the COPII outer coat. The tetramer self-assembles in multiple copies to form the complete polyhedral cage. Interacts (via WD 8) with SEC13. Interacts with PDCD6; interaction takes place in response to cytosolic calcium increase and leads to bridge together the BCR(KLHL12) complex and SEC31A, leading to monoubiquitination. Interacts with KLHL12. In terms of processing, monoubiquitinated by the BCR(KLHL12) E3 ubiquitin ligase complex, leading to regulate the size of COPII coats. As to expression, abundantly and ubiquitously expressed.

The protein resides in the cytoplasm. The protein localises to the cytoplasmic vesicle. It localises to the COPII-coated vesicle membrane. Its subcellular location is the endoplasmic reticulum membrane. It is found in the cytosol. Component of the coat protein complex II (COPII) which promotes the formation of transport vesicles from the endoplasmic reticulum (ER). The coat has two main functions, the physical deformation of the endoplasmic reticulum membrane into vesicles and the selection of cargo molecules. This chain is Protein transport protein Sec31A (SEC31A), found in Homo sapiens (Human).